The following is a 490-amino-acid chain: Probable alcohol acetyltransferase FCK4 (490 aa).

The protein belongs to the alcohol acetyltransferase FCK4 family.

The protein operates within secondary metabolite biosynthesis. In terms of biological role, probable alcohol acetyltransferase; part of the gene cluster that mediates the biosynthesis of cytokinins such as fusatin, fusatinic acids or 8-oxofusatin, known for their growth promoting and anti-senescence activities toward host plants. FCK1 is a bifunctional enzyme that performs the first steps in the biosynthesis of Fusarium cytokinins. It first condenses adenosine monophosphate (AMP) with dimethylallyl diphosphate (DMAPP) to yield isoprenyl adenosine monophosphate. It then catalyzes the removal of the phosphoribose to produce isopentenylaldehyde. The cytochrome P450 monooxygenase then converts isopentenylaldehyde to trans-zeatin. A condensation step converts trans-zeatin to fusatin which is further modified to produce fusatinic acid. The mechanism for oxidation of fusatin to fusatinic acid remains unknown. 8-oxofusatin could be produced through several pathways, via direct oxygenation of fusatin, or via the 8-oxo-pentenyladenine intermediate which itself must arise from either the prenylation of 8-oxo-AMP by FCK1 and/or oxygenation of isopentenylaldehyde. Both the FCK3 and FCK4 enzymes act downstream of the identified cytokinins to produce yet unidentified compounds. The protein is Probable alcohol acetyltransferase FCK4 of Fusarium pseudograminearum (strain CS3096) (Wheat and barley crown-rot fungus).